Here is a 197-residue protein sequence, read N- to C-terminus: Ribonuclease HII (197 aa).

Residues 10 to 197 form the RNase H type-2 domain; that stretch reads ELIAGVDEVG…APVRKLLNTL (188 aa). Residues aspartate 16, glutamate 17, and aspartate 108 each coordinate a divalent metal cation.

The protein belongs to the RNase HII family. Mn(2+) serves as cofactor. The cofactor is Mg(2+).

The protein localises to the cytoplasm. It catalyses the reaction Endonucleolytic cleavage to 5'-phosphomonoester.. Its function is as follows. Endonuclease that specifically degrades the RNA of RNA-DNA hybrids. This Pasteurella multocida (strain Pm70) protein is Ribonuclease HII (rnhB).